Here is a 420-residue protein sequence, read N- to C-terminus: D-tagatose-1,6-bisphosphate aldolase subunit GatZ (420 aa).

This sequence belongs to the GatZ/KbaZ family. GatZ subfamily. Forms a complex with GatY.

It functions in the pathway carbohydrate metabolism; D-tagatose 6-phosphate degradation; D-glyceraldehyde 3-phosphate and glycerone phosphate from D-tagatose 6-phosphate: step 2/2. In terms of biological role, component of the tagatose-1,6-bisphosphate aldolase GatYZ that is required for full activity and stability of the Y subunit. Could have a chaperone-like function for the proper and stable folding of GatY. When expressed alone, GatZ does not show any aldolase activity. Is involved in the catabolism of galactitol. The protein is D-tagatose-1,6-bisphosphate aldolase subunit GatZ of Escherichia coli O45:K1 (strain S88 / ExPEC).